We begin with the raw amino-acid sequence, 370 residues long: DNA replication and repair protein RecF (370 aa).

30 to 37 serves as a coordination point for ATP; sequence GENAQGKT.

The protein belongs to the RecF family.

Its subcellular location is the cytoplasm. In terms of biological role, the RecF protein is involved in DNA metabolism; it is required for DNA replication and normal SOS inducibility. RecF binds preferentially to single-stranded, linear DNA. It also seems to bind ATP. In Listeria innocua serovar 6a (strain ATCC BAA-680 / CLIP 11262), this protein is DNA replication and repair protein RecF.